Reading from the N-terminus, the 545-residue chain is Ubiquitin carboxyl-terminal hydrolase 17-like protein D (545 aa).

Residues Cys51–Gln348 enclose the USP domain. The active-site Nucleophile is the Cys60. His307 functions as the Proton acceptor in the catalytic mechanism. Disordered regions lie at residues Leu367 to Gln443 and Arg521 to Arg545. Residues Lys374–Ser385 are compositionally biased toward basic residues. Residues Glu393–Lys404 are compositionally biased toward basic and acidic residues. Basic residues predominate over residues Gly524–Gln537.

Belongs to the peptidase C19 family. USP17 subfamily. As to expression, detected in T-cell, myeloid, and embryonic stem cell lines.

The protein localises to the nucleus. The protein resides in the endoplasmic reticulum. It catalyses the reaction Thiol-dependent hydrolysis of ester, thioester, amide, peptide and isopeptide bonds formed by the C-terminal Gly of ubiquitin (a 76-residue protein attached to proteins as an intracellular targeting signal).. Functionally, deubiquitinating enzyme that removes conjugated ubiquitin from specific proteins to regulate different cellular processes that may include cell proliferation, progression through the cell cycle, apoptosis, cell migration, and the cellular response to viral infection. The sequence is that of Ubiquitin carboxyl-terminal hydrolase 17-like protein D from Mus musculus (Mouse).